The primary structure comprises 717 residues: Fatty acid oxidation complex subunit alpha (717 aa).

The interval 1-190 is enoyl-CoA hydratase/isomerase; sequence MIHAGNAITV…KDGAVDAVVS (190 aa). Substrate is bound at residue D298. A 3-hydroxyacyl-CoA dehydrogenase region spans residues 313–717; it reads HPVNQAAVLG…MAENNKKFYG (405 aa). Residues M326, D345, 402-404, K409, and S431 each bind NAD(+); that span reads VTE. Residue H452 is the For 3-hydroxyacyl-CoA dehydrogenase activity of the active site. N455 contributes to the NAD(+) binding site. Residue N502 participates in substrate binding.

This sequence in the N-terminal section; belongs to the enoyl-CoA hydratase/isomerase family. It in the C-terminal section; belongs to the 3-hydroxyacyl-CoA dehydrogenase family. In terms of assembly, heterotetramer of two alpha chains (FadB) and two beta chains (FadA).

It catalyses the reaction a (3S)-3-hydroxyacyl-CoA + NAD(+) = a 3-oxoacyl-CoA + NADH + H(+). The catalysed reaction is a (3S)-3-hydroxyacyl-CoA = a (2E)-enoyl-CoA + H2O. It carries out the reaction a 4-saturated-(3S)-3-hydroxyacyl-CoA = a (3E)-enoyl-CoA + H2O. The enzyme catalyses (3S)-3-hydroxybutanoyl-CoA = (3R)-3-hydroxybutanoyl-CoA. It catalyses the reaction a (3Z)-enoyl-CoA = a 4-saturated (2E)-enoyl-CoA. The catalysed reaction is a (3E)-enoyl-CoA = a 4-saturated (2E)-enoyl-CoA. The protein operates within lipid metabolism; fatty acid beta-oxidation. In terms of biological role, involved in the aerobic and anaerobic degradation of long-chain fatty acids via beta-oxidation cycle. Catalyzes the formation of 3-oxoacyl-CoA from enoyl-CoA via L-3-hydroxyacyl-CoA. It can also use D-3-hydroxyacyl-CoA and cis-3-enoyl-CoA as substrate. The chain is Fatty acid oxidation complex subunit alpha from Acinetobacter baylyi (strain ATCC 33305 / BD413 / ADP1).